We begin with the raw amino-acid sequence, 435 residues long: 5-methylthioadenosine/S-adenosylhomocysteine deaminase (435 aa).

The Zn(2+) site is built by histidine 65 and histidine 67. Residues glutamate 94, arginine 150, and histidine 189 each coordinate substrate. Histidine 216 is a binding site for Zn(2+). Residues glutamate 219 and aspartate 304 each coordinate substrate. Aspartate 304 is a Zn(2+) binding site.

It belongs to the metallo-dependent hydrolases superfamily. MTA/SAH deaminase family. The cofactor is Zn(2+).

The catalysed reaction is S-adenosyl-L-homocysteine + H2O + H(+) = S-inosyl-L-homocysteine + NH4(+). The enzyme catalyses S-methyl-5'-thioadenosine + H2O + H(+) = S-methyl-5'-thioinosine + NH4(+). In terms of biological role, catalyzes the deamination of 5-methylthioadenosine and S-adenosyl-L-homocysteine into 5-methylthioinosine and S-inosyl-L-homocysteine, respectively. Is also able to deaminate adenosine. The sequence is that of 5-methylthioadenosine/S-adenosylhomocysteine deaminase from Bacillus thuringiensis (strain Al Hakam).